The chain runs to 249 residues: Proteasome activator complex subunit 1 (249 aa).

A disordered region spans residues 60 to 101; it reads PLDIPVPDPVKEKEKGERKKQQEKEDKDEKKKGEDEDKGPPC. Over residues 68–98 the composition is skewed to basic and acidic residues; sequence PVKEKEKGERKKQQEKEDKDEKKKGEDEDKG.

The protein belongs to the PA28 family. In terms of assembly, heterodimer of PSME1 and PSME2, which forms a hexameric ring. PSME1 can form homoheptamers.

Implicated in immunoproteasome assembly and required for efficient antigen processing. The PA28 activator complex enhances the generation of class I binding peptides by altering the cleavage pattern of the proteasome. The sequence is that of Proteasome activator complex subunit 1 (PSME1) from Macaca fascicularis (Crab-eating macaque).